A 104-amino-acid polypeptide reads, in one-letter code: Large ribosomal subunit protein bL28 (104 aa).

It belongs to the bacterial ribosomal protein bL28 family.

This is Large ribosomal subunit protein bL28 from Wolbachia sp. subsp. Brugia malayi (strain TRS).